A 305-amino-acid polypeptide reads, in one-letter code: Porphobilinogen deaminase (305 aa).

C240 is subject to S-(dipyrrolylmethanemethyl)cysteine.

It belongs to the HMBS family. In terms of assembly, monomer. It depends on dipyrromethane as a cofactor.

The enzyme catalyses 4 porphobilinogen + H2O = hydroxymethylbilane + 4 NH4(+). It participates in porphyrin-containing compound metabolism; protoporphyrin-IX biosynthesis; coproporphyrinogen-III from 5-aminolevulinate: step 2/4. Tetrapolymerization of the monopyrrole PBG into the hydroxymethylbilane pre-uroporphyrinogen in several discrete steps. The chain is Porphobilinogen deaminase from Xylella fastidiosa (strain M23).